A 565-amino-acid polypeptide reads, in one-letter code: Sulfite reductase [NADPH] hemoprotein beta-component (565 aa).

Residues C429, C435, C474, and C478 each coordinate [4Fe-4S] cluster. C478 is a siroheme binding site.

This sequence belongs to the nitrite and sulfite reductase 4Fe-4S domain family. As to quaternary structure, alpha(8)-beta(8). The alpha component is a flavoprotein, the beta component is a hemoprotein. Siroheme serves as cofactor. [4Fe-4S] cluster is required as a cofactor.

It carries out the reaction hydrogen sulfide + 3 NADP(+) + 3 H2O = sulfite + 3 NADPH + 4 H(+). It participates in sulfur metabolism; hydrogen sulfide biosynthesis; hydrogen sulfide from sulfite (NADPH route): step 1/1. Its function is as follows. Component of the sulfite reductase complex that catalyzes the 6-electron reduction of sulfite to sulfide. This is one of several activities required for the biosynthesis of L-cysteine from sulfate. In Shewanella oneidensis (strain ATCC 700550 / JCM 31522 / CIP 106686 / LMG 19005 / NCIMB 14063 / MR-1), this protein is Sulfite reductase [NADPH] hemoprotein beta-component.